We begin with the raw amino-acid sequence, 107 residues long: Large ribosomal subunit protein uL24 (107 aa).

Belongs to the universal ribosomal protein uL24 family. In terms of assembly, part of the 50S ribosomal subunit.

Its function is as follows. One of two assembly initiator proteins, it binds directly to the 5'-end of the 23S rRNA, where it nucleates assembly of the 50S subunit. Functionally, one of the proteins that surrounds the polypeptide exit tunnel on the outside of the subunit. The sequence is that of Large ribosomal subunit protein uL24 from Fervidobacterium nodosum (strain ATCC 35602 / DSM 5306 / Rt17-B1).